The sequence spans 238 residues: Ditrans,polycis-undecaprenyl-diphosphate synthase ((2E,6E)-farnesyl-diphosphate specific) (238 aa).

D14 is an active-site residue. Mg(2+) is bound at residue D14. Substrate-binding positions include 15 to 18 (GNGR), W19, R27, H31, and 59 to 61 (SSE). Residue N62 is the Proton acceptor of the active site. Substrate-binding positions include W63, R65, R182, and 188–190 (RIS). E201 contributes to the Mg(2+) binding site.

The protein belongs to the UPP synthase family. Homodimer. Mg(2+) serves as cofactor.

The enzyme catalyses 8 isopentenyl diphosphate + (2E,6E)-farnesyl diphosphate = di-trans,octa-cis-undecaprenyl diphosphate + 8 diphosphate. Catalyzes the sequential condensation of isopentenyl diphosphate (IPP) with (2E,6E)-farnesyl diphosphate (E,E-FPP) to yield (2Z,6Z,10Z,14Z,18Z,22Z,26Z,30Z,34E,38E)-undecaprenyl diphosphate (di-trans,octa-cis-UPP). UPP is the precursor of glycosyl carrier lipid in the biosynthesis of bacterial cell wall polysaccharide components such as peptidoglycan and lipopolysaccharide. This Legionella pneumophila subsp. pneumophila (strain Philadelphia 1 / ATCC 33152 / DSM 7513) protein is Ditrans,polycis-undecaprenyl-diphosphate synthase ((2E,6E)-farnesyl-diphosphate specific).